The sequence spans 474 residues: UDP-N-acetylmuramate--L-alanine ligase (474 aa).

Residue G123–T129 coordinates ATP.

This sequence belongs to the MurCDEF family.

It localises to the cytoplasm. The enzyme catalyses UDP-N-acetyl-alpha-D-muramate + L-alanine + ATP = UDP-N-acetyl-alpha-D-muramoyl-L-alanine + ADP + phosphate + H(+). The protein operates within cell wall biogenesis; peptidoglycan biosynthesis. In terms of biological role, cell wall formation. This Alcanivorax borkumensis (strain ATCC 700651 / DSM 11573 / NCIMB 13689 / SK2) protein is UDP-N-acetylmuramate--L-alanine ligase.